The chain runs to 384 residues: Ubiquitin-like modifier-activating enzyme 5 (384 aa).

Residues Gly63, Asp84, Lys107, Asn130, and Asn164 each coordinate ATP. Residues Cys206 and Cys209 each contribute to the Zn(2+) site. The active-site Glycyl thioester intermediate is Cys230. 2 residues coordinate Zn(2+): Cys283 and Cys288. The interval Glu352–Glu375 is disordered.

Belongs to the ubiquitin-activating E1 family. UBA5 subfamily.

Its function is as follows. E1-like enzyme which activates UFM1. The sequence is that of Ubiquitin-like modifier-activating enzyme 5 from Drosophila persimilis (Fruit fly).